Consider the following 69-residue polypeptide: Large ribosomal subunit protein bL31 (69 aa).

Residues Cys17, Cys19, Cys37, and Cys40 each contribute to the Zn(2+) site.

It belongs to the bacterial ribosomal protein bL31 family. Type A subfamily. Part of the 50S ribosomal subunit. Requires Zn(2+) as cofactor.

In terms of biological role, binds the 23S rRNA. This Clostridium novyi (strain NT) protein is Large ribosomal subunit protein bL31.